A 244-amino-acid polypeptide reads, in one-letter code: DNA repair protein RecO (244 aa).

It belongs to the RecO family.

Its function is as follows. Involved in DNA repair and RecF pathway recombination. This is DNA repair protein RecO from Nocardioides sp. (strain ATCC BAA-499 / JS614).